The chain runs to 534 residues: uncharacterized protein (534 aa).

This is an uncharacterized protein from Escherichia coli (strain K12).